The sequence spans 749 residues: Cytosolic phospholipase A2 (749 aa).

Residues 1–178 form a phospholipid binding region; sequence MSFIDPYQHI…MKKLLGPKKS (178 aa). The residue at position 2 (serine 2) is a Phosphoserine. One can recognise a C2 domain in the interval 6 to 122; sequence PYQHIIVEHQ…KVGEKKEVPF (117 aa). Aspartate 40, threonine 41, aspartate 43, asparagine 65, aspartate 93, alanine 94, and asparagine 95 together coordinate Ca(2+). In terms of domain architecture, PLA2c spans 140–740; that stretch reads SCPDLRFSMA…SNVEARRFFN (601 aa). Serine 228 acts as the Nucleophile in catalysis. Position 268 is a phosphothreonine (threonine 268). Residues 427–456 are disordered; it reads KHIVSNDSSDSDDESQEPKGTENEDAERDY. Phosphoserine occurs at positions 434, 435, and 437. Position 505 is a phosphoserine; by MAPK (serine 505). Serine 515 carries the post-translational modification Phosphoserine. Lysine 541 is covalently cross-linked (Glycyl lysine isopeptide (Lys-Gly) (interchain with G-Cter in SUMO2)). Aspartate 549 acts as the Proton acceptor in catalysis. Lysine 606 is covalently cross-linked (Glycyl lysine isopeptide (Lys-Gly) (interchain with G-Cter in SUMO2)). Phosphoserine occurs at positions 727 and 729.

In terms of assembly, interacts with KAT5. Phosphorylated at both Ser-505 and Ser-727 in response to mitogenic stimuli.

The protein resides in the cytoplasm. It localises to the golgi apparatus membrane. The protein localises to the nucleus envelope. It carries out the reaction a 1,2-diacyl-sn-glycero-3-phosphocholine + H2O = a 1-acyl-sn-glycero-3-phosphocholine + a fatty acid + H(+). The catalysed reaction is a 1-O-alkyl-2-acyl-sn-glycero-3-phosphocholine + H2O = a 1-O-alkyl-sn-glycero-3-phosphocholine + a fatty acid + H(+). It catalyses the reaction a 1-acyl-sn-glycero-3-phosphocholine + H2O = sn-glycerol 3-phosphocholine + a fatty acid + H(+). The enzyme catalyses 1-hexadecanoyl-2-(5Z,8Z,11Z,14Z-eicosatetraenoyl)-sn-glycero-3-phosphocholine + H2O = 1-hexadecanoyl-sn-glycero-3-phosphocholine + (5Z,8Z,11Z,14Z)-eicosatetraenoate + H(+). It carries out the reaction 1,2-di-(5Z,8Z,11Z,14Z-eicosatetraenoyl)-sn-glycero-3-phosphocholine + H2O = 1-(5Z,8Z,11Z,14Z-eicosatetraenoyl)-sn-glycero-3-phosphocholine + (5Z,8Z,11Z,14Z)-eicosatetraenoate + H(+). The catalysed reaction is 1-octadecanoyl-2-(5Z,8Z,11Z,14Z-eicosatetraenoyl)-sn-glycero-3-phosphocholine + H2O = 1-octadecanoyl-sn-glycero-3-phosphocholine + (5Z,8Z,11Z,14Z)-eicosatetraenoate + H(+). It catalyses the reaction 1-hexadecanoyl-2-(9Z,12Z-octadecadienoyl)-sn-glycero-3-phosphocholine + H2O = (9Z,12Z)-octadecadienoate + 1-hexadecanoyl-sn-glycero-3-phosphocholine + H(+). The enzyme catalyses 1-octadecanoyl-2-(9Z,12Z,15Z-octadecatrienoyl)-sn-glycero-3-phosphocholine + H2O = (9Z,12Z,15Z)-octadecatrienoate + 1-octadecanoyl-sn-glycero-3-phosphocholine + H(+). It carries out the reaction 1-(5Z,8Z,11Z,14Z-eicosatetraenoyl)-2-hexadecanoyl-sn-glycero-3-phosphocholine + H2O = 1-(5Z,8Z,11Z,14Z-eicosatetraenoyl)-sn-glycero-3-phosphocholine + hexadecanoate + H(+). The catalysed reaction is 1-O-hexadecyl-2-(5Z,8Z,11Z,14Z)-eicosatetraenoyl-sn-glycero-3-phosphocholine + H2O = 1-O-hexadecyl-sn-glycero-3-phosphocholine + (5Z,8Z,11Z,14Z)-eicosatetraenoate + H(+). It catalyses the reaction 1,2-di-(9Z-octadecenoyl)-sn-glycero-3-phospho-(1'-sn-glycerol) + H2O = 1-(9Z-octadecenoyl)-sn-glycero-3-phospho-(1'-sn-glycerol) + (9Z)-octadecenoate + H(+). The enzyme catalyses 1-octadecanoyl-2-(5Z,8Z,11Z,14Z-eicosatetraenoyl)-sn-glycero-3-phosphate + H2O = 1-octadecanoyl-sn-glycero-3-phosphate + (5Z,8Z,11Z,14Z)-eicosatetraenoate + H(+). It carries out the reaction 1-hexadecanoyl-sn-glycero-3-phosphocholine + H2O = sn-glycerol 3-phosphocholine + hexadecanoate + H(+). The catalysed reaction is 2-(prostaglandin E2)-sn-glycero-3-phosphoethanolamine + H2O = sn-glycero-3-phosphoethanolamine + prostaglandin E2 + H(+). It catalyses the reaction 2-[(15S)-hydroxy-(5Z,8Z,11Z,13E)-eicosatetraenoyl]-sn-glycero-3-phosphocholine + H2O = (15S)-hydroxy-(5Z,8Z,11Z,13E)-eicosatetraenoate + sn-glycerol 3-phosphocholine + H(+). The enzyme catalyses 2-[(15R)-hydroxy-(5Z,8Z,11Z,13E)-eicosatetraenoyl]-sn-glycero-3-phosphocholine + H2O = (15R)-hydroxy-(5Z,8Z,11Z,13E)-eicosatetraenoate + sn-glycerol 3-phosphocholine + H(+). It carries out the reaction 2-(prostaglandin E2)-sn-glycero-3-phosphocholine + H2O = prostaglandin E2 + sn-glycerol 3-phosphocholine + H(+). The catalysed reaction is 2-[(11R)-hydroxy-(5Z,8Z,12E,14Z)-eicosatetraenoyl]-sn-glycero-3-phosphocholine + H2O = (11R)-hydroxy-(5Z,8Z,12E,14Z)-eicosatetraenoate + sn-glycerol 3-phosphocholine + H(+). It catalyses the reaction 1-(5Z,8Z,11Z,14Z-eicosatetraenoyl)-2-O-hexadecyl-sn-glycero-3-phosphocholine + H2O = 2-O-hexadecyl-sn-glycero-3-phosphocholine + (5Z,8Z,11Z,14Z)-eicosatetraenoate + H(+). The enzyme catalyses 1-octadecanoyl-2-(5Z,8Z,11Z,14Z-eicosatetraenoyl)-sn-glycero-3-phosphocholine + glycerol = 1-(5Z,8Z,11Z,14Z-eicosatetraenoyl)-glycerol + 1-octadecanoyl-sn-glycero-3-phosphocholine. It carries out the reaction 1-octadecanoyl-2-(9Z,12Z,15Z-octadecatrienoyl)-sn-glycero-3-phosphocholine + glycerol = 1-(9Z,12Z,15Z-octadecatrienoyl)-glycerol + 1-octadecanoyl-sn-glycero-3-phosphocholine. It participates in membrane lipid metabolism; glycerophospholipid metabolism. It functions in the pathway lipid metabolism; arachidonate metabolism. The protein operates within lipid metabolism; prostaglandin biosynthesis. Its pathway is lipid metabolism; leukotriene B4 biosynthesis. With respect to regulation, activated by cytosolic calcium, which is necessary for binding to membrane lipids. Activated by phosphorylation in response to mitogenic stimuli. Its function is as follows. Has primarily calcium-dependent phospholipase and lysophospholipase activities, with a major role in membrane lipid remodeling and biosynthesis of lipid mediators of the inflammatory response. Plays an important role in embryo implantation and parturition through its ability to trigger prostanoid production. Preferentially hydrolyzes the ester bond of the fatty acyl group attached at sn-2 position of phospholipids (phospholipase A2 activity). Selectively hydrolyzes sn-2 arachidonoyl group from membrane phospholipids, providing the precursor for eicosanoid biosynthesis via the cyclooxygenase pathway. In an alternative pathway of eicosanoid biosynthesis, hydrolyzes sn-2 fatty acyl chain of eicosanoid lysophopholipids to release free bioactive eicosanoids. Hydrolyzes the ester bond of the fatty acyl group attached at sn-1 position of phospholipids (phospholipase A1 activity) only if an ether linkage rather than an ester linkage is present at the sn-2 position. This hydrolysis is not stereospecific. Has calcium-independent phospholipase A2 and lysophospholipase activities in the presence of phosphoinositides. Has O-acyltransferase activity. Catalyzes the transfer of fatty acyl chains from phospholipids to a primary hydroxyl group of glycerol (sn-1 or sn-3), potentially contributing to monoacylglycerol synthesis. The chain is Cytosolic phospholipase A2 (PLA2G4A) from Equus caballus (Horse).